An 822-amino-acid polypeptide reads, in one-letter code: Sushi domain-containing protein 2 (822 aa).

The N-terminal stretch at Met-1 to Ala-27 is a signal peptide. The region spanning Gln-28–Leu-66 is the SMB domain. The Extracellular portion of the chain corresponds to Gln-28–Ala-785. Cystine bridges form between Cys-31-Cys-35, Cys-31-Cys-44, Cys-35-Cys-62, Cys-42-Cys-44, Cys-42-Cys-55, Cys-48-Cys-54, and Cys-55-Cys-62. N-linked (GlcNAc...) asparagine glycans are attached at residues Asn-162 and Asn-177. One can recognise an AMOP domain in the interval Pro-285–Arg-433. A VWFD domain is found at Arg-445–Leu-639. An N-linked (GlcNAc...) asparagine glycan is attached at Asn-522. Residues Val-723–Pro-780 enclose the Sushi domain. Disulfide bonds link Cys-725–Cys-765 and Cys-751–Cys-778. The helical transmembrane segment at Val-786–Val-806 threads the bilayer. Residues Leu-807–Pro-822 lie on the Cytoplasmic side of the membrane.

Interacts with LGALS1; leads to an increased amount of LGALS1 on the cell surface. Interacts with GPR15LG; the interaction is direct. As to expression, highly expressed in breast cancer, but shows a restricted expression pattern in normal tissues such as adipose, adrenal gland, kidney, lung, mammary gland, placenta, thyroid, trachea, and uterus. Also expressed in colon; down-regulated in colon cancer tissues.

It is found in the cell membrane. In terms of biological role, may be a cytokine receptor for GPR15LG. May be a tumor suppressor; together with GPR15LG has a growth inhibitory effect on colon cancer cells which includes G1 cell cycle arrest. May play a role in breast tumorigenesis. The chain is Sushi domain-containing protein 2 (SUSD2) from Homo sapiens (Human).